The primary structure comprises 140 residues: MGPMAHRSHTGTGPSQRQLRVGELIRRTLADVLNRGEIHDPELNRLSITVGEVRCSPDLKVATVHVMPLGGKDVEEAISLLSKHRGELRHHITRQMTLKYAPDLRFRPDETFDRLDETRRLFSDKTVMRDIRGGGEADED.

The protein belongs to the RbfA family. In terms of assembly, monomer. Binds 30S ribosomal subunits, but not 50S ribosomal subunits or 70S ribosomes.

The protein localises to the cytoplasm. One of several proteins that assist in the late maturation steps of the functional core of the 30S ribosomal subunit. Associates with free 30S ribosomal subunits (but not with 30S subunits that are part of 70S ribosomes or polysomes). Required for efficient processing of 16S rRNA. May interact with the 5'-terminal helix region of 16S rRNA. The sequence is that of Ribosome-binding factor A from Cereibacter sphaeroides (strain ATCC 17023 / DSM 158 / JCM 6121 / CCUG 31486 / LMG 2827 / NBRC 12203 / NCIMB 8253 / ATH 2.4.1.) (Rhodobacter sphaeroides).